A 215-amino-acid polypeptide reads, in one-letter code: [PSI+] inducibility protein 3 (215 aa).

Ser2 is subject to N-acetylserine. Phosphoserine is present on residues Ser52 and Ser55. Positions 54 to 113 constitute an SH3 domain; the sequence is ASLEYVEALYQFDPQQDGDLGLKPGDKVQLLEKLSPEWYKGSCNGRTGIFPANYVKPAFS. A Glycyl lysine isopeptide (Lys-Gly) (interchain with G-Cter in ubiquitin) cross-link involves residue Lys80. The interval 114-189 is disordered; sequence GSNGPSNLPP…HQSSHSHLKS (76 aa). Positions 124–127 match the PY motif motif; the sequence is PPQY.

The protein belongs to the LSB1 family. Interacts with LAS17, RSP5 and SUP35. Post-translationally, ubiquitinated by RSP5. Ubiquitination reduces the protein abundance and its prion-inducing ability.

It localises to the cytoplasm. Its subcellular location is the nucleus. The protein resides in the cytoskeleton. The protein localises to the actin patch. Its function is as follows. Overproduction promotes the de novo induction of the [PSI+] prion form of SUP35. The prion-inducing effect depends on the association with the actin cytoskeleton. Also implicated in prion maintenance during heat stress. This chain is [PSI+] inducibility protein 3 (PIN3), found in Saccharomyces cerevisiae (strain ATCC 204508 / S288c) (Baker's yeast).